Here is a 769-residue protein sequence, read N- to C-terminus: Serine/threonine-protein kinase PLK4 (769 aa).

The Protein kinase domain maps to 10–263 (YEVYEILGKG…LDQVLQHPFM (254 aa)). ATP-binding positions include 16-24 (LGKGGFASV) and Lys-39. The Proton acceptor role is filled by Asp-134. 3 disordered regions span residues 280–304 (SSDS…SSYG), 337–380 (PQQR…LDIP), and 592–651 (APLT…VLSS). Over residues 337-371 (PQQRPQSASHNKPTSDFFSGISNDPRTMAPSSPTK) the composition is skewed to polar residues. Residues 374-491 (KKRLDIPPLN…ARFVQMVKAK (118 aa)) form the Cryptic POLO box 1 (CPB1) domain. Positions 492–595 (TPKITYYSEK…GRRPANAPLT (104 aa)) constitute a Cryptic POLO box 2 (CPB2) domain. Polar residues predominate over residues 605–648 (TKENQLYSNISSPNTPQTPHQMPSFAMSTASHTSAGNPLTQRPV). The 84-residue stretch at 662-745 (AMKKCTIAGV…MPAILRELNA (84 aa)) folds into the POLO box domain.

Belongs to the protein kinase superfamily. Ser/Thr protein kinase family. CDC5/Polo subfamily. As to quaternary structure, homodimer. In terms of processing, ubiquitinated; leading to its degradation by the proteasome.

Its subcellular location is the cytoplasm. It localises to the cytoskeleton. The protein resides in the microtubule organizing center. It is found in the centrosome. The protein localises to the centriole. The enzyme catalyses L-seryl-[protein] + ATP = O-phospho-L-seryl-[protein] + ADP + H(+). It catalyses the reaction L-threonyl-[protein] + ATP = O-phospho-L-threonyl-[protein] + ADP + H(+). In terms of biological role, serine/threonine-protein kinase that plays a central role in centriole duplication. Able to trigger procentriole formation on the surface of the mother centriole cylinder, leading to the recruitment of centriole biogenesis proteins. When overexpressed, it is able to induce centrosome amplification through the simultaneous generation of multiple procentrioles adjoining each parental centriole during S phase. The polypeptide is Serine/threonine-protein kinase PLK4 (SAK) (Aedes aegypti (Yellowfever mosquito)).